Here is a 48-residue protein sequence, read N- to C-terminus: uncharacterized protein (48 aa).

The tract at residues 1-20 (MLLKNWPSRRIQRDKSKRAG) is disordered.

This is an uncharacterized protein from Bacillus subtilis (strain 168).